A 294-amino-acid chain; its full sequence is 4-hydroxy-tetrahydrodipicolinate synthase (294 aa).

Position 47 (T47) interacts with pyruvate. Y135 functions as the Proton donor/acceptor in the catalytic mechanism. The active-site Schiff-base intermediate with substrate is the K163. Residue T205 participates in pyruvate binding.

This sequence belongs to the DapA family. In terms of assembly, homotetramer; dimer of dimers.

It is found in the cytoplasm. It carries out the reaction L-aspartate 4-semialdehyde + pyruvate = (2S,4S)-4-hydroxy-2,3,4,5-tetrahydrodipicolinate + H2O + H(+). It participates in amino-acid biosynthesis; L-lysine biosynthesis via DAP pathway; (S)-tetrahydrodipicolinate from L-aspartate: step 3/4. Functionally, catalyzes the condensation of (S)-aspartate-beta-semialdehyde [(S)-ASA] and pyruvate to 4-hydroxy-tetrahydrodipicolinate (HTPA). In Rickettsia montanensis, this protein is 4-hydroxy-tetrahydrodipicolinate synthase.